The sequence spans 1463 residues: Probable oxidoreductase PXDNL (1463 aa).

A signal peptide spans 1–23; it reads MEPRLFCWTTLFLLAGWCLPGLP. The LRRNT domain maps to 24–50; it reads CPSRCLCFKSTVRCMHLMLDHIPQVPQ. 5 LRR repeats span residues 51 to 72, 75 to 96, 99 to 120, 123 to 144, and 147 to 168; these read QTTV…AFKK, NLNT…AFEG, NLLY…TFKG, SLEH…TFGD, and RLER…SFSN. The 54-residue stretch at 180–233 folds into the LRRCT domain; it reads NALVCDCDLMWLGELLQGFAQHGHTQAAATCEYPRRLHGRAVASVTVEEFNCQS. Ig-like C2-type domains are found at residues 234-322, 330-414, 419-504, and 507-596; these read PRIT…AMLR, PSFV…ANII, PQFT…VQLT, and PKAL…MFLT. Disulfide bonds link C255–C305, C351–C398, C440–C488, C532–C580, and C718–C734. N387 carries N-linked (GlcNAc...) asparagine glycosylation. H812 serves as the catalytic Proton acceptor. D813 provides a ligand contact to Ca(2+). 2 disulfides stabilise this stretch: C832–C842 and C836–C859. Residues T891, Y893, D895, and S897 each contribute to the Ca(2+) site. Residues C944 and C953 are joined by a disulfide bond. H1057 lines the heme b pocket. Disulfide bonds link C1160/C1217 and C1258/C1284. One can recognise a VWFC domain in the interval 1393 to 1451; that stretch reads AGCTDVRGVPRKAEERWMKEDCTHCICESGQVTCVVEICPPAPCPSPELVKGTCCPVCR.

Belongs to the peroxidase family. XPO subfamily. As to quaternary structure, interacts with PXDN; this interaction inhibits the peroxidase activity of PXDN. Heme b serves as cofactor. In terms of processing, phosphorylation by SRC on tyrosine residues is required for targeting to polysomes. As to expression, the 57 kDa isoform PMR1 is the only form detected at protein levels in human cell lines. Expressed in heart.

It localises to the secreted. Its subcellular location is the endoplasmic reticulum. It is found in the cell membrane. The protein localises to the cytoplasm. Its function is as follows. Probable oxidoreductase. Lacks peroxidase activity. Inhibits the peroxidase activity of PXDN through its interaction. Endonuclease selectively degrading some target mRNAs while they are engaged by translating ribosomes, among which albumin and beta-globin mRNAs. The protein is Probable oxidoreductase PXDNL of Homo sapiens (Human).